Consider the following 81-residue polypeptide: uncharacterized protein (81 aa).

The signal sequence occupies residues 1-24 (MRKILKIVSLLILLLLLVYSFFSP). Residues 25–28 (NSQL) are Extracellular-facing. The chain crosses the membrane as a helical span at residues 29 to 49 (FVFVQLIIIAFLIGFGINCFV). The Cytoplasmic portion of the chain corresponds to 50–81 (KKERYQGTLYFVIAICNITINLDKINELIQSI).

Its subcellular location is the cell membrane. This is an uncharacterized protein from Bacillus subtilis (strain 168).